The chain runs to 997 residues: Protein Smaug (997 aa).

The segment covering 1-37 has biased composition (polar residues); the sequence is MKYATGTDNAMTSGISGQTNNSNSASTEMQPTTSTPT. Disordered stretches follow at residues 1 to 69 and 329 to 370; these read MKYA…QSQP and LCPA…GSSS. 2 stretches are compositionally biased toward low complexity: residues 44–69 and 329–338; these read TPTA…QSQP and LCPASGSRSS. Residues Ser564 and Ser575 each carry the phosphoserine modification. An interaction with cup region spans residues 583 to 763; that stretch reads EFKPNYIKFH…KDLKFKLSKM (181 aa). Positions 600 to 654 constitute an SAM domain; it reads GIGLWLKSLRLHKYIELFKNMTYEEMLLITEDFLQSVGVTKGASHKLALCIEKLK. Disordered stretches follow at residues 773–892 and 944–972; these read HVKP…MQQM and GSSD…TSAE. 2 stretches are compositionally biased toward polar residues: residues 802-822 and 854-864; these read NGSN…NFSL and HQPQYKSSSYP. Ser970 is modified (phosphoserine).

This sequence belongs to the SMAUG family. As to quaternary structure, interacts with oskar (osk). Binds to the 3'-UTR of nos. Interacts with cup, which in turn recruits eIF4-E, leading to an indirect interaction between smg and eIF4-E that prevents mRNA translation.

The protein resides in the cytoplasm. In terms of biological role, translation regulator that binds to the 3'-UTR of specific mRNAs such as nanos (nos) and prevent their translation. Prevents translation of unlocalized nos in the bulk cytoplasm via the recruitment of cup. The polypeptide is Protein Smaug (Drosophila erecta (Fruit fly)).